Consider the following 235-residue polypeptide: Ribonuclease 3 (235 aa).

One can recognise an RNase III domain in the interval 6–135 (LISLEKILGF…VIGAVYFDCG (130 aa)). Position 48 (glutamate 48) interacts with Mg(2+). Aspartate 52 is an active-site residue. The Mg(2+) site is built by asparagine 121 and glutamate 124. The active site involves glutamate 124. One can recognise a DRBM domain in the interval 162–231 (DEKTTLQELL…AKKALELLKN (70 aa)).

Belongs to the ribonuclease III family. In terms of assembly, homodimer. Mg(2+) serves as cofactor.

The protein resides in the cytoplasm. The enzyme catalyses Endonucleolytic cleavage to 5'-phosphomonoester.. Its function is as follows. Digests double-stranded RNA. Involved in the processing of primary rRNA transcript to yield the immediate precursors to the large and small rRNAs (23S and 16S). Processes some mRNAs, and tRNAs when they are encoded in the rRNA operon. Processes pre-crRNA and tracrRNA of type II CRISPR loci if present in the organism. This chain is Ribonuclease 3, found in Carboxydothermus hydrogenoformans (strain ATCC BAA-161 / DSM 6008 / Z-2901).